The primary structure comprises 215 residues: Thymidylate kinase (215 aa).

ATP is bound at residue glycine 10–threonine 17.

This sequence belongs to the thymidylate kinase family.

The catalysed reaction is dTMP + ATP = dTDP + ADP. Phosphorylation of dTMP to form dTDP in both de novo and salvage pathways of dTTP synthesis. The chain is Thymidylate kinase from Bartonella henselae (strain ATCC 49882 / DSM 28221 / CCUG 30454 / Houston 1) (Rochalimaea henselae).